The primary structure comprises 164 residues: Cytochrome c-type biogenesis protein CcmE (164 aa).

Topologically, residues 1 to 8 (MNPRRKSR) are cytoplasmic. A helical; Signal-anchor for type II membrane protein membrane pass occupies residues 9–29 (LYLAIVVLIGVALTATLMLYA). Over 30 to 164 (LRSNIDLFYT…ATPQNEGAKS (135 aa)) the chain is Periplasmic. Residues His130 and Tyr134 each coordinate heme. Positions 131–148 (DEKYTPPEVADAMKENHK) are enriched in basic and acidic residues. Residues 131-164 (DEKYTPPEVADAMKENHKGPASAYATPQNEGAKS) form a disordered region. Residues 155–164 (ATPQNEGAKS) are compositionally biased toward polar residues.

Belongs to the CcmE/CycJ family.

It is found in the cell inner membrane. Functionally, heme chaperone required for the biogenesis of c-type cytochromes. Transiently binds heme delivered by CcmC and transfers the heme to apo-cytochromes in a process facilitated by CcmF and CcmH. This Serratia proteamaculans (strain 568) protein is Cytochrome c-type biogenesis protein CcmE.